Here is a 664-residue protein sequence, read N- to C-terminus: DNA ligase (664 aa).

NAD(+) contacts are provided by residues 32 to 36 (DKEYD) and 80 to 81 (SL). The N6-AMP-lysine intermediate role is filled by lysine 122. 3 residues coordinate NAD(+): arginine 144, glutamate 178, and lysine 314. Residues cysteine 407, cysteine 410, cysteine 423, and cysteine 429 each contribute to the Zn(2+) site. The region spanning 587 to 664 (IDENPFMDKT…NEEEFSNKIK (78 aa)) is the BRCT domain.

It belongs to the NAD-dependent DNA ligase family. LigA subfamily. Mg(2+) is required as a cofactor. The cofactor is Mn(2+).

The enzyme catalyses NAD(+) + (deoxyribonucleotide)n-3'-hydroxyl + 5'-phospho-(deoxyribonucleotide)m = (deoxyribonucleotide)n+m + AMP + beta-nicotinamide D-nucleotide.. In terms of biological role, DNA ligase that catalyzes the formation of phosphodiester linkages between 5'-phosphoryl and 3'-hydroxyl groups in double-stranded DNA using NAD as a coenzyme and as the energy source for the reaction. It is essential for DNA replication and repair of damaged DNA. This is DNA ligase from Clostridium botulinum (strain Loch Maree / Type A3).